A 780-amino-acid chain; its full sequence is Neutral ceramidase (780 aa).

Over 1–12 the chain is Cytoplasmic; the sequence is MAKRTFSNLETF. Residues 13 to 33 form a helical; Signal-anchor for type II membrane protein membrane-spanning segment; sequence LIFLLVMMSAITVALLSLLFI. At 34–780 the chain is on the lumenal side; that stretch reads TSGTIENHKD…TSPAFEVVTI (747 aa). Positions 47–90 are disordered; the sequence is HFFSTTQSPPATQGSTAAQRSTATQHSTATQSSTATQTSPVPLT. Positions 57-85 are enriched in low complexity; it reads ATQGSTAAQRSTATQHSTATQSSTATQTS. A glycan (O-linked (GalNAc...) threonine) is linked at Thr-62. Ser-67 carries O-linked (GalNAc...) serine glycosylation. Residues Thr-68 and Thr-70 are each glycosylated (O-linked (GalNAc...) threonine). Ser-73 carries O-linked (GalNAc...) serine glycosylation. 2 O-linked (GalNAc...) threonine glycosylation sites follow: Thr-74 and Thr-76. Residues Ser-78 and Ser-79 are each glycosylated (O-linked (GalNAc...) serine). Residues Thr-80, Thr-82, and Thr-84 are each glycosylated (O-linked (GalNAc...) threonine). A glycan (N-linked (GlcNAc...) asparagine) is linked at Asn-98. Leu-134 serves as a coordination point for Ca(2+). N-linked (GlcNAc...) asparagine glycosylation is present at Asn-151. A Zn(2+)-binding site is contributed by His-194. An N-linked (GlcNAc...) asparagine glycan is attached at Asn-217. His-303 provides a ligand contact to Zn(2+). An N-linked (GlcNAc...) asparagine glycan is attached at Asn-308. The active-site Nucleophile is Ser-354. Disulfide bonds link Cys-362-Cys-376 and Cys-369-Cys-384. 2 N-linked (GlcNAc...) asparagine glycosylation sites follow: Asn-440 and Asn-468. Cys-448 and Cys-498 are joined by a disulfide. Glu-540 provides a ligand contact to Zn(2+). Asn-564 is a glycosylation site (N-linked (GlcNAc...) asparagine). Residue Tyr-579 participates in Zn(2+) binding. Asp-712, Ser-714, and Thr-717 together coordinate Ca(2+). N-linked (GlcNAc...) asparagine glycosylation is present at Asn-730. A required for correct folding and localization region spans residues 770–780; that stretch reads GTSPAFEVVTI. Thr-779 carries O-linked (GalNAc...) threonine glycosylation.

It belongs to the neutral ceramidase family. The cofactor is Zn(2+). Proteolytic cleavage of the N-terminus removes the signal-anchor and produces a soluble form of the protein. Post-translationally, N-glycosylated. Required for enzyme activity. In terms of processing, O-glycosylated. Required to retain it as a type II membrane protein at the cell surface. Phosphorylated. May prevent ubiquitination and subsequent degradation. Post-translationally, ubiquitinated, leading to its degradation by the proteasome. Ubiquitination is triggered by nitric oxide. In terms of tissue distribution, primarily expressed in intestine. Ubiquitously expressed with higher levels in kidney, skeletal muscle and heart. The ubiquitous expression observed for ASAH2 might be an experimental artifact due to the paralog ASAH2B.

It localises to the cell membrane. The protein resides in the membrane raft. It is found in the membrane. Its subcellular location is the caveola. The protein localises to the golgi apparatus membrane. It localises to the mitochondrion. The protein resides in the secreted. It is found in the extracellular exosome. The enzyme catalyses an N-acylsphing-4-enine + H2O = sphing-4-enine + a fatty acid. The catalysed reaction is N-dodecanoylsphing-4-enine + H2O = dodecanoate + sphing-4-enine. It carries out the reaction N-hexadecanoylsphing-4-enine + H2O = sphing-4-enine + hexadecanoate. It catalyses the reaction N-octanoylsphing-4-enine + H2O = octanoate + sphing-4-enine. The enzyme catalyses N-(hexanoyl)sphing-4-enine + H2O = hexanoate + sphing-4-enine. The catalysed reaction is N-octadecanoylsphing-4-enine + H2O = sphing-4-enine + octadecanoate. It carries out the reaction N-tetradecanoylsphing-4-enine + H2O = tetradecanoate + sphing-4-enine. It catalyses the reaction N-(9Z-octadecenoyl)-sphing-4-enine + H2O = sphing-4-enine + (9Z)-octadecenoate. The enzyme catalyses N-(15Z-tetracosenoyl)-sphing-4-enine + H2O = (15Z)-tetracosenoate + sphing-4-enine. The catalysed reaction is sphinganine + hexadecanoate = N-hexadecanoylsphinganine + H2O. It carries out the reaction N-(octadecanoyl)-sphinganine + H2O = sphinganine + octadecanoate. It participates in lipid metabolism; sphingolipid metabolism. With respect to regulation, inhibited by dithiothreitol (DTT) and 2-mercaptoethanol. Activity is mildly stimulated by Ca(2+) and Mg(2+), but is not inhibited by EDTA. Activity is inhibited by millimolar levels of Fe(2+), Zn(2+) and Cu(2+). Inhibited by cholesterol. Its function is as follows. Plasma membrane ceramidase that hydrolyzes sphingolipid ceramides into sphingosine and free fatty acids at neutral pH. Ceramides, sphingosine, and its phosphorylated form sphingosine-1-phosphate are bioactive lipids that mediate cellular signaling pathways regulating several biological processes including cell proliferation, apoptosis and differentiation. Also catalyzes the reverse reaction allowing the synthesis of ceramides from fatty acids and sphingosine. Together with sphingomyelinase, participates in the production of sphingosine and sphingosine-1-phosphate from the degradation of sphingomyelin, a sphingolipid enriched in the plasma membrane of cells. Also participates in the hydrolysis of ceramides from the extracellular milieu allowing the production of sphingosine-1-phosphate inside and outside cells. This is the case for instance with the digestion of dietary sphingolipids in the intestinal tract. This chain is Neutral ceramidase (ASAH2), found in Homo sapiens (Human).